A 654-amino-acid chain; its full sequence is tRNA 5-methylaminomethyl-2-thiouridine biosynthesis bifunctional protein MnmC (654 aa).

The segment at 1 to 236 is tRNA (mnm(5)s(2)U34)-methyltransferase; the sequence is MPTLLQHAQI…KWEVMSGAYV (236 aa). The interval 262–654 is FAD-dependent cmnm(5)s(2)U34 oxidoreductase; that stretch reads IGAGLAGSSS…FGLRRLIRGK (393 aa).

This sequence in the N-terminal section; belongs to the methyltransferase superfamily. tRNA (mnm(5)s(2)U34)-methyltransferase family. In the C-terminal section; belongs to the DAO family. Requires FAD as cofactor.

The protein localises to the cytoplasm. The enzyme catalyses 5-aminomethyl-2-thiouridine(34) in tRNA + S-adenosyl-L-methionine = 5-methylaminomethyl-2-thiouridine(34) in tRNA + S-adenosyl-L-homocysteine + H(+). Catalyzes the last two steps in the biosynthesis of 5-methylaminomethyl-2-thiouridine (mnm(5)s(2)U) at the wobble position (U34) in tRNA. Catalyzes the FAD-dependent demodification of cmnm(5)s(2)U34 to nm(5)s(2)U34, followed by the transfer of a methyl group from S-adenosyl-L-methionine to nm(5)s(2)U34, to form mnm(5)s(2)U34. In Pseudomonas putida (strain ATCC 700007 / DSM 6899 / JCM 31910 / BCRC 17059 / LMG 24140 / F1), this protein is tRNA 5-methylaminomethyl-2-thiouridine biosynthesis bifunctional protein MnmC.